A 278-amino-acid polypeptide reads, in one-letter code: Large ribosomal subunit protein uL2 (278 aa).

Disordered regions lie at residues 32–54 (SLCR…TRHI) and 221–278 (RGMT…RNAK). A compositionally biased stretch (gly residues) spans 232 to 245 (NGGGEGKSKSGGGR).

It belongs to the universal ribosomal protein uL2 family. As to quaternary structure, part of the 50S ribosomal subunit. Forms a bridge to the 30S subunit in the 70S ribosome.

In terms of biological role, one of the primary rRNA binding proteins. Required for association of the 30S and 50S subunits to form the 70S ribosome, for tRNA binding and peptide bond formation. It has been suggested to have peptidyltransferase activity; this is somewhat controversial. Makes several contacts with the 16S rRNA in the 70S ribosome. This is Large ribosomal subunit protein uL2 from Akkermansia muciniphila (strain ATCC BAA-835 / DSM 22959 / JCM 33894 / BCRC 81048 / CCUG 64013 / CIP 107961 / Muc).